Here is a 203-residue protein sequence, read N- to C-terminus: ATP-dependent Clp protease proteolytic subunit (203 aa).

Catalysis depends on serine 100, which acts as the Nucleophile. Histidine 125 is an active-site residue.

The protein belongs to the peptidase S14 family. As to quaternary structure, fourteen ClpP subunits assemble into 2 heptameric rings which stack back to back to give a disk-like structure with a central cavity, resembling the structure of eukaryotic proteasomes.

Its subcellular location is the cytoplasm. The enzyme catalyses Hydrolysis of proteins to small peptides in the presence of ATP and magnesium. alpha-casein is the usual test substrate. In the absence of ATP, only oligopeptides shorter than five residues are hydrolyzed (such as succinyl-Leu-Tyr-|-NHMec, and Leu-Tyr-Leu-|-Tyr-Trp, in which cleavage of the -Tyr-|-Leu- and -Tyr-|-Trp bonds also occurs).. In terms of biological role, cleaves peptides in various proteins in a process that requires ATP hydrolysis. Has a chymotrypsin-like activity. Plays a major role in the degradation of misfolded proteins. The polypeptide is ATP-dependent Clp protease proteolytic subunit (Anaeromyxobacter sp. (strain K)).